The primary structure comprises 790 residues: Phenylalanine--tRNA ligase beta subunit (790 aa).

The tRNA-binding domain maps to 39 to 154 (PDSLNTVVTG…ENTPLGESAC (116 aa)). Residues 404–483 (SDPLSLNIRP…FVQKTQKILP (80 aa)) form the B5 domain. 4 residues coordinate Mg(2+): Asp-457, Asp-463, Glu-466, and Glu-467. The region spanning 694 to 790 (PIYPSSSRDI…NLANIGKGNS (97 aa)) is the FDX-ACB domain.

This sequence belongs to the phenylalanyl-tRNA synthetase beta subunit family. Type 1 subfamily. Tetramer of two alpha and two beta subunits. Mg(2+) serves as cofactor.

It localises to the cytoplasm. It carries out the reaction tRNA(Phe) + L-phenylalanine + ATP = L-phenylalanyl-tRNA(Phe) + AMP + diphosphate + H(+). This Chlamydia muridarum (strain MoPn / Nigg) protein is Phenylalanine--tRNA ligase beta subunit (pheT).